Here is a 198-residue protein sequence, read N- to C-terminus: Endothelin-3 (198 aa).

The N-terminal stretch at 1 to 16 (MEPGLWLLFGLTVTSA) is a signal peptide. The propeptide occupies 17–86 (AGLVPCPQPG…SKGGPVHGRA (70 aa)). A disordered region spans residues 22-79 (CPQPGDAGKSGVPGTPPTARSEGDIQEPVAMTAVQGPSPRSPEQEQELGRFGEQASKG). Disulfide bonds link cysteine 89–cysteine 103 and cysteine 91–cysteine 99. Residues 110–198 (INTPEQTVPY…RGNGGLRPTR (89 aa)) constitute a propeptide that is removed on maturation. The interval 150–164 (CACVQSQDSACLHFC) is endothelin-like. A disordered region spans residues 174–198 (SRTATNPDKEEEPASRGNGGLRPTR).

It belongs to the endothelin/sarafotoxin family. As to expression, expressed in which included heart, lung, liver, kidney, spleen, stomach, pancreas, duodenum, colon, uterus, ovary and testis.

Its subcellular location is the secreted. Endothelins are endothelium-derived vasoconstrictor peptides. This chain is Endothelin-3 (EDN3), found in Canis lupus familiaris (Dog).